A 488-amino-acid chain; its full sequence is Histone deacetylase 2 (488 aa).

A histone deacetylase region spans residues 9 to 322 (KKKVCYYYDG…WTYETAVALD (314 aa)). Residues Gly-28 and Lys-32 each coordinate 1D-myo-inositol 1,4,5,6-tetrakisphosphate. Residue Lys-75 is modified to N6-acetyllysine; alternate. Residue Lys-75 forms a Glycyl lysine isopeptide (Lys-Gly) (interchain with G-Cter in SUMO2); alternate linkage. Residue His-142 is part of the active site. Ca(2+) is bound by residues Asp-175, Asp-177, His-179, Phe-188, Thr-191, Val-194, Ser-198, and Phe-199. Residues Asp-177 and His-179 each coordinate Zn(2+). N6-acetyllysine is present on Lys-221. Tyr-223 lines the Ca(2+) pocket. Cys-262 is subject to S-nitrosocysteine. Residue Asp-265 coordinates Zn(2+). Arg-271 lines the 1D-myo-inositol 1,4,5,6-tetrakisphosphate pocket. Cys-274 carries the post-translational modification S-nitrosocysteine. The tract at residues 389–488 (AVHEDSGDED…GTKSEQLSNP (100 aa)) is disordered. Ser-394, Ser-407, Ser-422, and Ser-424 each carry phosphoserine. The span at 402 to 417 (PDKRISIRASDKRIAC) shows a compositional bias: basic and acidic residues. The segment covering 418–428 (DEEFSDSEDEG) has biased composition (acidic residues). The span at 429–481 (EGGRRNVADHKKGAKKARIEEDKKETEDKKTDVKEEDKSKDNSGEKTDTKGTK) shows a compositional bias: basic and acidic residues. Residues Lys-439, Lys-452, Lys-458, Lys-462, Lys-478, and Lys-481 each participate in a glycyl lysine isopeptide (Lys-Gly) (interchain with G-Cter in SUMO2) cross-link.

It belongs to the histone deacetylase family. HD type 1 subfamily. As to quaternary structure, part of the core histone deacetylase (HDAC) complex composed of HDAC1, HDAC2, RBBP4 and RBBP7, the core complex associates with SIN3, SAP18 and SAP30 to form the SIN3 HDAC complex. Component of the nucleosome remodeling and deacetylase (NuRD) repressor complex, composed of core proteins MTA1, MTA2, MTA3, RBBP4, RBBP7, HDAC1, HDAC2, MBD2, MBD3, and peripherally associated proteins CDK2AP1, CDK2AP2, GATAD2A, GATAD2B, CHD3, CHD4 and CHD5. The exact stoichiometry of the NuRD complex is unknown, and some subunits such as MBD2 and MBD3, GATAD2A and GATAD2B, and CHD3, CHD4 and CHD5 define mutually exclusive NuRD complexes. Component of a RCOR/GFI/KDM1A/HDAC complex. Component of a BHC histone deacetylase complex that contains HDAC1, HDAC2, HMG20B, KDM1A, RCOR1 and PHF21A. The BHC complex may also contain ZMYM2, ZNF217, ZMYM3, GSE1 and GTF2I. Part of a complex containing the core histones H2A, H2B, H3 and H4, DEK and unphosphorylated DAXX. Part of a complex containing ATR and CHD4. Forms a heterologous complex at least with YY1. Interacts in the late S-phase of DNA-replication with DNMT1 in the other transcriptional repressor complex composed of DNMT1, DMAP1, PCNA, CAF1. Component of a mSin3A corepressor complex that contains SIN3A, SAP130, SUDS3, ARID4B, HDAC1 and HDAC2. Part of a complex composed of TRIM28, HDAC1, HDAC2 and EHMT2. Part of a complex containing at least CDYL, MIER1, MIER2, HDAC1 and HDAC2. Component of a histone deacetylase complex containing DNTTIP1, ZNF541, HDAC1 and HDAC2. Forms a complex comprising APPL1, RUVBL2, APPL2, CTNNB1 and HDAC1. Interacts directly with GFI1. Interacts directly with GFI1B. Interacts with APEX1; the interaction is not dependent on the acetylated status of APEX1. Interacts with ATR. Interacts with BCL6 (non-acetylated form). Interacts with BEND3. Interacts with CBFA2T3. Interacts with CDK2AP1. Interacts with CHD4. Interacts with CHD5. Interacts with CHFR. Interacts with CRY1. Interacts with DNMT1. Interacts with GATAD2A. Interacts with HCFC1. Interacts with HDAC7. Interacts with HDAC10. Interacts with INSM1. Interacts with KDM4A. Interacts with MACROH2A1 (via the non-histone region). Interacts with MBD3L2. Interacts with MTA1, with a preference for sumoylated MTA1. Interacts with NACC2. Interacts with NRIP1. Interacts with PELP1. Interacts with PIMREG. Interacts with PRDM6. Interacts with PWWP2B. Interacts with SAP30. Interacts with SAP30L. Interacts with SETDB1. Interacts with SIX3. Interacts with SMARCAD1. Interacts with SNW1. Interacts with SPHK2. Interacts with SPEN/MINT. Interacts (CK2 phosphorylated form) with SP3. Interacts with SUV39H1. Interacts with TSHZ3 (via its N-terminus). Interacts with ZMYND8. Interacts with ZNF431. Interacts with ZNF263; recruited to the SIX3 promoter along with other proteins involved in chromatin modification and transcriptional corepression where it contributes to transcriptional repression. Identified in a complex with HDAC1, KCTD19, DNTTIP1 and ZNF541. Component of the SIN3B complex, which includes SIN3B, HDAC2, PHF12 and MORF4L1; interacts directly with all subunits. Requires Zn(2+) as cofactor. Ca(2+) is required as a cofactor. In terms of processing, S-nitrosylated by GAPDH. In neurons, S-nitrosylation at Cys-262 and Cys-274 does not affect enzyme activity, but induces HDAC2 release from chromatin. This in turn increases acetylation of histones surrounding neurotrophin-dependent gene promoters and promotes their transcription. In embryonic cortical neurons, S-Nitrosylation regulates dendritic growth and branching. As to expression, widely expressed; lower levels in brain and lung.

Its subcellular location is the nucleus. The protein localises to the cytoplasm. It catalyses the reaction N(6)-acetyl-L-lysyl-[histone] + H2O = L-lysyl-[histone] + acetate. It carries out the reaction N(6)-acetyl-L-lysyl-[protein] + H2O = L-lysyl-[protein] + acetate. The catalysed reaction is N(6)-(2E)-butenoyl-L-lysyl-[protein] + H2O = (2E)-2-butenoate + L-lysyl-[protein]. The enzyme catalyses N(6)-(2-hydroxyisobutanoyl)-L-lysyl-[protein] + H2O = 2-hydroxy-2-methylpropanoate + L-lysyl-[protein]. It catalyses the reaction N(6)-[(S)-lactoyl]-L-lysyl-[protein] + H2O = (S)-lactate + L-lysyl-[protein]. Inositol tetraphosphate (1D-myo-inositol 1,4,5,6-tetrakisphosphate) may act as an intermolecular glue between HDAC2 and N-Cor repressor complex components. In terms of biological role, histone deacetylase that catalyzes the deacetylation of lysine residues on the N-terminal part of the core histones (H2A, H2B, H3 and H4). Histone deacetylation gives a tag for epigenetic repression and plays an important role in transcriptional regulation, cell cycle progression and developmental events. Histone deacetylases act via the formation of large multiprotein complexes. Forms transcriptional repressor complexes by associating with MAD, SIN3, YY1 and N-COR. Component of a RCOR/GFI/KDM1A/HDAC complex that suppresses, via histone deacetylase (HDAC) recruitment, a number of genes implicated in multilineage blood cell development. Acts as a component of the histone deacetylase NuRD complex which participates in the remodeling of chromatin. Component of the SIN3B complex that represses transcription and counteracts the histone acetyltransferase activity of EP300 through the recognition H3K27ac marks by PHF12 and the activity of the histone deacetylase HDAC2. Also deacetylates non-histone targets: deacetylates TSHZ3, thereby regulating its transcriptional repressor activity. May be involved in the transcriptional repression of circadian target genes, such as PER1, mediated by CRY1 through histone deacetylation. Involved in MTA1-mediated transcriptional corepression of TFF1 and CDKN1A. In addition to protein deacetylase activity, also acts as a protein-lysine deacylase by recognizing other acyl groups: catalyzes removal of (2E)-butenoyl (crotonyl), lactoyl (lactyl) and 2-hydroxyisobutanoyl (2-hydroxyisobutyryl) acyl groups from lysine residues, leading to protein decrotonylation, delactylation and de-2-hydroxyisobutyrylation, respectively. This is Histone deacetylase 2 from Homo sapiens (Human).